The sequence spans 202 residues: MNILNRLGLGSSGQTNMDPSPIAQGNDDDTPAPGNQFAQFGAGCFWGVELAFQRVPGVTQTEAGYTQGTVDNPSYGDVCSGTTGHSEVVRVQYDLNDCTYESLLDLFWSRHDPTTLNRQGNDVGTQYRSGIYFYTPEQEKLARESLERHQQQMERKIMTEILPAKKFYRAEEHHQQYLSKGGRFGQGQSTAKGCNDPIRCYG.

A disordered region spans residues 1–34; sequence MNILNRLGLGSSGQTNMDPSPIAQGNDDDTPAPG. The residue at position 189 (Ser189) is a Phosphoserine.

Belongs to the MsrA Met sulfoxide reductase family. Expressed in rosette and cauline leaves, and at lower levels in roots, stems and flowers (at protein level).

The protein localises to the cytoplasm. The protein resides in the cytosol. The catalysed reaction is L-methionyl-[protein] + [thioredoxin]-disulfide + H2O = L-methionyl-(S)-S-oxide-[protein] + [thioredoxin]-dithiol. The enzyme catalyses [thioredoxin]-disulfide + L-methionine + H2O = L-methionine (S)-S-oxide + [thioredoxin]-dithiol. Catalyzes the reduction of methionine sulfoxide (MetSO) to methionine in proteins. Plays a protective role against oxidative stress by restoring activity to proteins that have been inactivated by methionine oxidation. May prevent cellular oxidative damage due to light exposure. MSRA family specifically reduces the MetSO S-enantiomer. In Arabidopsis thaliana (Mouse-ear cress), this protein is Peptide methionine sulfoxide reductase A3 (MSRA3).